A 193-amino-acid polypeptide reads, in one-letter code: uncharacterized protein (193 aa).

This is an uncharacterized protein from Mycoplasma genitalium (strain ATCC 33530 / DSM 19775 / NCTC 10195 / G37) (Mycoplasmoides genitalium).